The sequence spans 508 residues: GMP synthase [glutamine-hydrolyzing] (508 aa).

The 189-residue stretch at Met1–Thr189 folds into the Glutamine amidotransferase type-1 domain. The Nucleophile role is filled by Cys78. Residues His163 and Glu165 contribute to the active site. Positions Trp190 to Arg383 constitute a GMPS ATP-PPase domain. Residue Ser217–Thr223 participates in ATP binding.

In terms of assembly, homodimer.

It catalyses the reaction XMP + L-glutamine + ATP + H2O = GMP + L-glutamate + AMP + diphosphate + 2 H(+). It functions in the pathway purine metabolism; GMP biosynthesis; GMP from XMP (L-Gln route): step 1/1. Catalyzes the synthesis of GMP from XMP. In Helicobacter pylori (strain HPAG1), this protein is GMP synthase [glutamine-hydrolyzing].